The primary structure comprises 352 residues: Histidinol-phosphate aminotransferase (352 aa).

Lys-221 is subject to N6-(pyridoxal phosphate)lysine.

This sequence belongs to the class-II pyridoxal-phosphate-dependent aminotransferase family. Histidinol-phosphate aminotransferase subfamily. Homodimer. The cofactor is pyridoxal 5'-phosphate.

It carries out the reaction L-histidinol phosphate + 2-oxoglutarate = 3-(imidazol-4-yl)-2-oxopropyl phosphate + L-glutamate. Its pathway is amino-acid biosynthesis; L-histidine biosynthesis; L-histidine from 5-phospho-alpha-D-ribose 1-diphosphate: step 7/9. This Staphylococcus aureus (strain MRSA252) protein is Histidinol-phosphate aminotransferase.